The following is a 272-amino-acid chain: NH(3)-dependent NAD(+) synthetase (272 aa).

45–52 serves as a coordination point for ATP; the sequence is GISGGQDS. Mg(2+) is bound at residue aspartate 51. Arginine 138 contacts deamido-NAD(+). ATP is bound at residue threonine 158. Glutamate 163 contributes to the Mg(2+) binding site. Residues lysine 171 and aspartate 178 each contribute to the deamido-NAD(+) site. Residues lysine 187 and threonine 209 each coordinate ATP. Deamido-NAD(+) is bound at residue 258-259; the sequence is HK.

The protein belongs to the NAD synthetase family. As to quaternary structure, homodimer.

The enzyme catalyses deamido-NAD(+) + NH4(+) + ATP = AMP + diphosphate + NAD(+) + H(+). The protein operates within cofactor biosynthesis; NAD(+) biosynthesis; NAD(+) from deamido-NAD(+) (ammonia route): step 1/1. Functionally, catalyzes the ATP-dependent amidation of deamido-NAD to form NAD. Uses ammonia as a nitrogen source. The sequence is that of NH(3)-dependent NAD(+) synthetase from Bacillus mycoides (strain KBAB4) (Bacillus weihenstephanensis).